The chain runs to 278 residues: Large ribosomal subunit protein uL2 (278 aa).

Basic residues-rich tracts occupy residues 210-219 and 252-263; these read RKRWLGKRPQ and KKSRGIKTRNSK. A disordered region spans residues 210 to 278; that stretch reads RKRWLGKRPQ…LIIRHRKGNK (69 aa).

The protein belongs to the universal ribosomal protein uL2 family. In terms of assembly, part of the 50S ribosomal subunit. Forms a bridge to the 30S subunit in the 70S ribosome.

Functionally, one of the primary rRNA binding proteins. Required for association of the 30S and 50S subunits to form the 70S ribosome, for tRNA binding and peptide bond formation. It has been suggested to have peptidyltransferase activity; this is somewhat controversial. Makes several contacts with the 16S rRNA in the 70S ribosome. This chain is Large ribosomal subunit protein uL2, found in Lactobacillus gasseri (strain ATCC 33323 / DSM 20243 / BCRC 14619 / CIP 102991 / JCM 1131 / KCTC 3163 / NCIMB 11718 / NCTC 13722 / AM63).